The following is a 680-amino-acid chain: Meiotic recombination protein REC8 (680 aa).

2 stretches are compositionally biased toward low complexity: residues 278–290 (ENDNENNSNGGED) and 436–446 (SLVSTQSSSST). Disordered regions lie at residues 278 to 297 (ENDNENNSNGGEDTSVENEG), 431 to 467 (RKRAHSLVSTQSSSSTRSHEYGRKSFRNNKNDNYSSD), and 540 to 560 (EQNFAEEDDSSNSCFSDGSQQ). The segment covering 550–560 (SNSCFSDGSQQ) has biased composition (polar residues).

This sequence belongs to the rad21 family. In terms of processing, proteolytically cleaved by ESP1. Phosphorylated by CDC5. CDC5 phosphorylation is necessary for cleavage by ESP1 and subsequent removal from chromosome arms.

Its subcellular location is the nucleus. It localises to the chromosome. The protein localises to the centromere. Functionally, replaces the SCC1 mitosis-specific cohesin to ensure sister chromatid cohesion during meiosis. Is cleaved by ESP1 shortly before the first meiotic division, and dissociates from chromatin, allowing sister chromatids to segregate. Is protected from cleavage by SPO13. Promotes localization of the LINC complex subunit MPS3 on nuclear envelope in mitotic cells. The chain is Meiotic recombination protein REC8 from Saccharomyces cerevisiae (strain ATCC 204508 / S288c) (Baker's yeast).